Consider the following 141-residue polypeptide: Large ribosomal subunit protein uL11c (141 aa).

It belongs to the universal ribosomal protein uL11 family. As to quaternary structure, part of the ribosomal stalk of the 50S ribosomal subunit. Interacts with L10 and the large rRNA to form the base of the stalk. L10 forms an elongated spine to which L12 dimers bind in a sequential fashion forming a multimeric L10(L12)X complex.

It localises to the plastid. The protein resides in the chloroplast. In terms of biological role, forms part of the ribosomal stalk which helps the ribosome interact with GTP-bound translation factors. The sequence is that of Large ribosomal subunit protein uL11c from Trieres chinensis (Marine centric diatom).